The sequence spans 63 residues: Translational regulator CsrA (63 aa).

The protein belongs to the CsrA/RsmA family. Homodimer; the beta-strands of each monomer intercalate to form a hydrophobic core, while the alpha-helices form wings that extend away from the core.

Its subcellular location is the cytoplasm. In terms of biological role, a key translational regulator that binds mRNA to regulate translation initiation and/or mRNA stability. Mediates global changes in gene expression, shifting from rapid growth to stress survival by linking envelope stress, the stringent response and the catabolite repression systems. Usually binds in the 5'-UTR; binding at or near the Shine-Dalgarno sequence prevents ribosome-binding, repressing translation, binding elsewhere in the 5'-UTR can activate translation and/or stabilize the mRNA. Its function is antagonized by small RNA(s). This chain is Translational regulator CsrA, found in Haemophilus influenzae (strain PittEE).